We begin with the raw amino-acid sequence, 194 residues long: 3-isopropylmalate dehydratase small subunit (194 aa).

Belongs to the LeuD family. LeuD type 1 subfamily. As to quaternary structure, heterodimer of LeuC and LeuD.

It carries out the reaction (2R,3S)-3-isopropylmalate = (2S)-2-isopropylmalate. It functions in the pathway amino-acid biosynthesis; L-leucine biosynthesis; L-leucine from 3-methyl-2-oxobutanoate: step 2/4. Its function is as follows. Catalyzes the isomerization between 2-isopropylmalate and 3-isopropylmalate, via the formation of 2-isopropylmaleate. The protein is 3-isopropylmalate dehydratase small subunit of Bacillus cereus (strain ATCC 14579 / DSM 31 / CCUG 7414 / JCM 2152 / NBRC 15305 / NCIMB 9373 / NCTC 2599 / NRRL B-3711).